The sequence spans 256 residues: UPF0246 protein Sbal_1048 (256 aa).

The protein belongs to the UPF0246 family.

This chain is UPF0246 protein Sbal_1048, found in Shewanella baltica (strain OS155 / ATCC BAA-1091).